Reading from the N-terminus, the 211-residue chain is Probable septum site-determining protein MinC (211 aa).

This sequence belongs to the MinC family. As to quaternary structure, interacts with MinD and FtsZ.

In terms of biological role, cell division inhibitor that blocks the formation of polar Z ring septums. Rapidly oscillates between the poles of the cell to destabilize FtsZ filaments that have formed before they mature into polar Z rings. Prevents FtsZ polymerization. The sequence is that of Probable septum site-determining protein MinC from Clostridium perfringens (strain 13 / Type A).